A 113-amino-acid chain; its full sequence is Protein ORF3 (113 aa).

2 hydrophobic regions span residues 1 to 21 (MGSP…CLCC) and 32 to 52 (AVVG…GLIL). An interaction with host HPX region spans residues 27 to 67 (ASRLAAVVGGATAVPAVVSGVTGLILSPSPSPIFIQPTPSL). Residues 47 to 71 (VTGLILSPSPSPIFIQPTPSLPMSF) form an interaction with the capsid protein region. Ser-70 is subject to Phosphoserine; by host. Residues 71-113 (FHNPGLELALDSRPAPLAPLGVTSPSAPPLPPVVDLPQLGLRR) are homodimerization, and interaction with host AMBP/bikunin. Residues 89–113 (PLGVTSPSAPPLPPVVDLPQLGLRR) form a disordered region. The segment at 94 to 103 (SPSAPPLPPV) is interaction with host SRC, HCK, FYN, PIK3R3 and GRB2. The PTAP/PSAP motif motif lies at 95–98 (PSAP).

Belongs to the hepevirus ORF3 protein family. As to quaternary structure, forms homooligomers. Interacts with host SRC, HCK, FYN, PIK3R3 and GRB2 (via SH3 domain); binding does not activate the kinases. Interacts with host AMBP/bikunin and AMBP/alpha-1-microglobulin peptides. Interacts with host HPX/hemopexin. Interacts (when phosphorylated) with capsid protein ORF2. Interacts with host TSG101; this interaction plays a role in viral release from the host cell. Interacts with host SIRPA; this interaction down-regulates the phosphorylation of host IRF3. In terms of processing, palmitoylated in the N-terminus.

The protein localises to the host endoplasmic reticulum membrane. Its subcellular location is the host cytoplasm. The protein resides in the host cytoskeleton. It localises to the virion. It is found in the host cell membrane. Its function is as follows. Small multifunctional phosphoprotein involved in virion morphogenesis, egress and counteracting host innate immunity. Plays critical roles in the final steps of viral release by interacting with host TSG101, a member of the vacuolar protein-sorting pathway and using other cellular host proteins involved in vesicle formation pathway. Also acts as a viroporin and forms ion conductive pores allowing viral particle release. Impairs the generation of type I interferon by down-regulating host TLR3 and TLR7 as well as their downstream signaling pathways. Down-regulates the phosphorylation of host IRF3 via the interaction with host SIRP-alpha, thereby inhibiting IFN-I expression. Interacts with host microtubules. The chain is Protein ORF3 from Bandicota bengalensis (lesser bandicoot rat).